The chain runs to 1150 residues: Serine/threonine-protein phosphatase 2A regulatory subunit B'' subunit alpha (1150 aa).

A disordered region spans residues 661-693 (PEVIKIQNKPEKKPGTPLPPPATSPSSPRPLSP). Residues 676-693 (TPLPPPATSPSSPRPLSP) show a composition bias toward pro residues. EF-hand domains follow at residues 758 to 793 (CPLYWKAPMFRAAGGEKTGFVTAQSFIAMWRKLLNN) and 972 to 1007 (RNPTSIEYWFRCMDVDGDGVLSMYELEYFYEEQCER). Residues aspartate 985, aspartate 987, aspartate 989, and glutamate 996 each contribute to the Ca(2+) site. Residues 1105-1132 (AQFQEGFEDYETDEPASPSEFGNKSNKI) form a disordered region.

PP2A consists of a common heterodimeric core enzyme, composed of a 36 kDa catalytic subunit (subunit C) and a 65 kDa constant regulatory subunit (PR65 or subunit A), that associates with a variety of regulatory subunits. Proteins that associate with the core dimer include three families of regulatory subunits B (the R2/B/PR55/B55, R3/B''/PR72/PR130/PR59 and R5/B'/B56 families), the 48 kDa variable regulatory subunit, viral proteins, and cell signaling molecules. As to expression, expressed in heart, brain, placenta, lung, muscle and kidney.

Its function is as follows. The B regulatory subunit might modulate substrate selectivity and catalytic activity, and might also direct the localization of the catalytic enzyme to a particular subcellular compartment. This is Serine/threonine-protein phosphatase 2A regulatory subunit B'' subunit alpha (PPP2R3A) from Homo sapiens (Human).